We begin with the raw amino-acid sequence, 37 residues long: Large ribosomal subunit protein bL36 (37 aa).

It belongs to the bacterial ribosomal protein bL36 family.

This is Large ribosomal subunit protein bL36 from Sulfurovum sp. (strain NBC37-1).